The following is a 163-amino-acid chain: Mating-type protein ALPHA2 (163 aa).

Positions 80 to 142 form a DNA-binding region, homeobox; TALE-type; sequence IEKRSKRFPK…NRRRKERTLT (63 aa).

It belongs to the TALE/M-ATYP homeobox family.

The protein localises to the nucleus. Mating type proteins are sequence specific DNA-binding proteins that act as master switches in yeast differentiation by controlling gene expression in a cell type-specific fashion. The chain is Mating-type protein ALPHA2 (MATALPHA2) from Pichia angusta (Yeast).